A 192-amino-acid chain; its full sequence is ATP synthase subunit b 2 (192 aa).

The helical transmembrane segment at 39–59 (SGFLAQLIWLALAFGLLYYLM) threads the bilayer.

Belongs to the ATPase B chain family. F-type ATPases have 2 components, F(1) - the catalytic core - and F(0) - the membrane proton channel. F(1) has five subunits: alpha(3), beta(3), gamma(1), delta(1), epsilon(1). F(0) has three main subunits: a(1), b(2) and c(10-14). The alpha and beta chains form an alternating ring which encloses part of the gamma chain. F(1) is attached to F(0) by a central stalk formed by the gamma and epsilon chains, while a peripheral stalk is formed by the delta and b chains.

It localises to the cell inner membrane. Functionally, f(1)F(0) ATP synthase produces ATP from ADP in the presence of a proton or sodium gradient. F-type ATPases consist of two structural domains, F(1) containing the extramembraneous catalytic core and F(0) containing the membrane proton channel, linked together by a central stalk and a peripheral stalk. During catalysis, ATP synthesis in the catalytic domain of F(1) is coupled via a rotary mechanism of the central stalk subunits to proton translocation. Its function is as follows. Component of the F(0) channel, it forms part of the peripheral stalk, linking F(1) to F(0). The b'-subunit is a diverged and duplicated form of b found in plants and photosynthetic bacteria. This Methylobacterium radiotolerans (strain ATCC 27329 / DSM 1819 / JCM 2831 / NBRC 15690 / NCIMB 10815 / 0-1) protein is ATP synthase subunit b 2 (atpF2).